The sequence spans 125 residues: Mitochondrial import inner membrane translocase subunit TIM16 (125 aa).

A J-like region spans residues 58-110; it reads EAQQILNVSKLSPEEVQKNYEHLFKVNDKSVGGSFYLQSKVVRAKERLDEELR. S69 carries the post-translational modification Phosphoserine.

The protein belongs to the TIM16/PAM16 family. Probable component of the PAM complex at least composed of a mitochondrial HSP70 protein, GRPEL1 or GRPEL2, TIMM44, TIMM16/PAM16 and TIMM14/DNAJC19. Interacts with DNAJC19. Directly interacts with DNAJC15; this interaction counteracts DNAJC15-dependent stimulation of HSPA9 ATPase activity. Associates with the TIM23 complex. As to expression, expressed in trabecular bone and cartilage and by differentiated chondrocytes localized in the hypertrophic zone and by osteoblasts at early developmental stages.

It is found in the mitochondrion inner membrane. Regulates ATP-dependent protein translocation into the mitochondrial matrix. Inhibits DNAJC19 stimulation of HSPA9/Mortalin ATPase activity. The protein is Mitochondrial import inner membrane translocase subunit TIM16 of Mus musculus (Mouse).